Here is a 1394-residue protein sequence, read N- to C-terminus: Cyclic nucleotide-gated channel beta-1 (1394 aa).

3 disordered regions span residues 1–95, 112–253, and 271–675; these read MLGW…AHSS, VPQP…QDSA, and VIRG…SQNS. Over 1–762 the chain is Cytoplasmic; sequence MLGWVQRVLP…WKKYQFPQSI (762 aa). 2 stretches are compositionally biased toward polar residues: residues 68–86 and 116–125; these read PQGT…QAQV and AHSSRPSQNI. 2 stretches are compositionally biased toward basic and acidic residues: residues 300–312 and 336–355; these read EESH…VDPH and DEEK…RIQE. Positions 356 to 387 are enriched in acidic residues; the sequence is EKEDEEEEKEDGEEEEEEGREKEEEEGEEKEE. Residues 388–408 show a composition bias toward basic and acidic residues; it reads EEGREKEEEEGEKKEEEGREK. Residues 409–418 are compositionally biased toward acidic residues; that stretch reads EEEEGGEKED. The segment covering 419 to 433 has biased composition (basic and acidic residues); it reads EEGREKEEEEGRGKE. 2 stretches are compositionally biased toward acidic residues: residues 452-464 and 481-490; these read EGRE…EEEQ and DRSEESETQD. Low complexity-rich tracts occupy residues 493 to 508 and 529 to 554; these read EVGG…GAQA and EVGG…AQDQ. Over residues 654–675 the composition is skewed to polar residues; that stretch reads DPTSPQGTDDQDRATSTASQNS. Positions 671 to 681 are calmodulin-binding CaM1; the sequence is ASQNSAIINDR. The IQ-like motif lies at 682–692; it reads LQELVKLFKER. Positions 699-732 are disordered; sequence KLIDPDVTSDEESPKPSPAKKAPEPAPEVKPAEA. A helical transmembrane segment spans residues 763 to 793; that stretch reads DPLTNLMYILWLFFVVLAWNWNCWLIPVRWA. At 794–798 the chain is on the extracellular side; that stretch reads FPYQT. A helical transmembrane segment spans residues 799–825; it reads PDNIHLWLLMDYLCDLIYLLDITVFQM. Topologically, residues 826–837 are cytoplasmic; sequence RLQFVRGGDIIT. Residues 838-861 traverse the membrane as a helical segment; it reads DKKEMRNNYVKSQRFKMDMLCLLP. At 862 to 872 the chain is on the extracellular side; that stretch reads LDLLYLKFGVN. Residues 873–887 form a helical membrane-spanning segment; sequence PLLRLPRCLKYMAFF. Residues 888 to 900 lie on the Cytoplasmic side of the membrane; it reads EFNNRLESILSKA. The ion conduction pathway stretch occupies residues 900–999; that stretch reads AYVYRVIRTT…IGQMRDVVGA (100 aa). A helical membrane pass occupies residues 901-922; the sequence is YVYRVIRTTAYLLYSLHLNSCL. The Extracellular portion of the chain corresponds to 923-931; it reads YYWASAYEG. The next 2 membrane-spanning stretches (helical) occupy residues 932–974 and 975–1002; these read LGST…EIVF and QGLN…AATA. A selectivity filter region spans residues 959–962; sequence TIGG. Over 1003 to 1394 the chain is Cytoplasmic; sequence GQTYYRSCMD…EEARKEKEEE (392 aa). Positions 1082–1198 are cyclic nucleotide-binding domain; sequence RQMIFDMLKR…LLRKKARRML (117 aa). Residues G1143, E1144, S1146, R1156, and T1157 each contribute to the 3',5'-cyclic GMP site. Residue R1156 participates in 3',5'-cyclic AMP binding. Positions 1261–1267 are calmodulin-binding CaM2; sequence QQQLLEQ. A disordered region spans residues 1265–1394; it reads LEQAKSSEDA…EEARKEKEEE (130 aa). The span at 1285-1326 shows a compositional bias: pro residues; that stretch reads EQPPRPEPPAPEAPAPEPTAPEPLAPEAPAPEAPAPSSPPPA. Basic and acidic residues-rich tracts occupy residues 1329–1345 and 1364–1376; these read ERPE…EHPV and VPEK…KKEE.

This sequence belongs to the cyclic nucleotide-gated cation channel (TC 1.A.1.5) family. CNGB1 subfamily. In terms of assembly, the rod cyclic nucleotide-gated channel is a heterotetramer composed of CNGA1 and CNGB1 subunits with 3:1 stoichiometry. CNGA1:CNGB1 channel binds Ca(2+)-bound CALM1 via CaM1 and CaM2 regions of the CNGB1 subunit; this interaction modulates the affinity of the channel for cNMPs in response to intracellular Ca(2+) levels. The olfactory cyclic nucleotide-gated channel is a heterotetramer composed of CNGA2, CNGA4 and CNGB1 subunits with 2:1:1 stoichiometry. As to expression, retina, testis, kidney, heart and brain.

It localises to the membrane. The enzyme catalyses Ca(2+)(in) = Ca(2+)(out). It carries out the reaction Na(+)(in) = Na(+)(out). The catalysed reaction is K(+)(in) = K(+)(out). It catalyses the reaction NH4(+)(in) = NH4(+)(out). The enzyme catalyses Rb(+)(in) = Rb(+)(out). It carries out the reaction Li(+)(in) = Li(+)(out). The catalysed reaction is Cs(+)(in) = Cs(+)(out). Functionally, pore-forming subunit of the rod cyclic nucleotide-gated channel. Mediates rod photoresponses at dim light converting transient changes in intracellular cGMP levels into electrical signals. In the dark, cGMP levels are high and keep the channel open enabling a steady inward current carried by Na(+) and Ca(2+) ions that leads to membrane depolarization and neurotransmitter release from synaptic terminals. Upon photon absorption cGMP levels decline leading to channel closure and membrane hyperpolarization that ultimately slows neurotransmitter release and signals the presence of light, the end point of the phototransduction cascade. Pore-forming subunit of the olfactory cyclic nucleotide-gated channel. Operates in the cilia of olfactory sensory neurons where chemical stimulation of the odorant is converted to an electrical signal. Mediates odorant-induced cAMP-dependent Ca(2+) influx triggering neuron depolarization. The rise of intracellular Ca(2+) levels potentiates the olfactory response by activating Ca(2+)-dependent Cl(-) channels, but it also serves as a negative feedback signal to desensitize the channel for rapid adaptation to odorants. Conducts cGMP- and cAMP-gated ion currents, with permeability for monovalent and divalent cations. The selectivity for Ca(2+) over Na(+) increases with cGMP concentrations, whereas the selectivity among monovalent ions is independent of the cGMP levels. The protein is Cyclic nucleotide-gated channel beta-1 of Bos taurus (Bovine).